The primary structure comprises 100 residues: NADH-quinone oxidoreductase subunit K (100 aa).

The next 3 helical transmembrane spans lie at Leu-4 to Leu-24, Leu-28 to Val-48, and Ile-60 to Leu-80.

This sequence belongs to the complex I subunit 4L family. In terms of assembly, NDH-1 is composed of 13 different subunits. Subunits NuoA, H, J, K, L, M, N constitute the membrane sector of the complex.

Its subcellular location is the cell inner membrane. It catalyses the reaction a quinone + NADH + 5 H(+)(in) = a quinol + NAD(+) + 4 H(+)(out). NDH-1 shuttles electrons from NADH, via FMN and iron-sulfur (Fe-S) centers, to quinones in the respiratory chain. The immediate electron acceptor for the enzyme in this species is believed to be ubiquinone. Couples the redox reaction to proton translocation (for every two electrons transferred, four hydrogen ions are translocated across the cytoplasmic membrane), and thus conserves the redox energy in a proton gradient. The polypeptide is NADH-quinone oxidoreductase subunit K (Proteus mirabilis (strain HI4320)).